A 217-amino-acid polypeptide reads, in one-letter code: Peptide deformylase 1 (217 aa).

C129 and H171 together coordinate Fe cation. E172 is a catalytic residue. H175 serves as a coordination point for Fe cation.

The protein belongs to the polypeptide deformylase family. Requires Fe(2+) as cofactor.

The enzyme catalyses N-terminal N-formyl-L-methionyl-[peptide] + H2O = N-terminal L-methionyl-[peptide] + formate. In terms of biological role, removes the formyl group from the N-terminal Met of newly synthesized proteins. Requires at least a dipeptide for an efficient rate of reaction. N-terminal L-methionine is a prerequisite for activity but the enzyme has broad specificity at other positions. This is Peptide deformylase 1 from Bifidobacterium longum (strain NCC 2705).